Reading from the N-terminus, the 257-residue chain is Ribonuclease HIII (257 aa).

The RNase H type-2 domain occupies lysine 71–valine 257. Residues aspartate 77, glutamate 78, and aspartate 179 each contribute to the a divalent metal cation site.

It belongs to the RNase HII family. RnhC subfamily. The cofactor is Mn(2+). Mg(2+) serves as cofactor.

The protein localises to the cytoplasm. It carries out the reaction Endonucleolytic cleavage to 5'-phosphomonoester.. Endonuclease that specifically degrades the RNA of RNA-DNA hybrids. The chain is Ribonuclease HIII (rnhC) from Aquifex aeolicus (strain VF5).